Consider the following 109-residue polypeptide: Nucleoid-associated protein Shal_1591 (109 aa).

The segment at 87-109 is disordered; the sequence is NQKEKMAEVTGGMQLPPGMKMPF.

The protein belongs to the YbaB/EbfC family. Homodimer.

It is found in the cytoplasm. It localises to the nucleoid. Its function is as follows. Binds to DNA and alters its conformation. May be involved in regulation of gene expression, nucleoid organization and DNA protection. The chain is Nucleoid-associated protein Shal_1591 from Shewanella halifaxensis (strain HAW-EB4).